A 325-amino-acid chain; its full sequence is Elongation factor P--(R)-beta-lysine ligase (325 aa).

76–78 (SPE) is a substrate binding site. ATP contacts are provided by residues 100–102 (RNE) and N109. Y118 is a binding site for substrate. ATP is bound at residue 244–245 (EL). E251 contributes to the substrate binding site. G300 provides a ligand contact to ATP.

This sequence belongs to the class-II aminoacyl-tRNA synthetase family. EpmA subfamily. As to quaternary structure, homodimer.

The catalysed reaction is D-beta-lysine + L-lysyl-[protein] + ATP = N(6)-((3R)-3,6-diaminohexanoyl)-L-lysyl-[protein] + AMP + diphosphate + H(+). With EpmB is involved in the beta-lysylation step of the post-translational modification of translation elongation factor P (EF-P). Catalyzes the ATP-dependent activation of (R)-beta-lysine produced by EpmB, forming a lysyl-adenylate, from which the beta-lysyl moiety is then transferred to the epsilon-amino group of a conserved specific lysine residue in EF-P. The polypeptide is Elongation factor P--(R)-beta-lysine ligase (Sodalis glossinidius (strain morsitans)).